The following is a 373-amino-acid chain: Forkhead box protein E1 (373 aa).

The disordered stretch occupies residues 19–51; sequence KEERGETAAGAGVPGEATGRGAGGRRRKRPLQR. Residues 41-50 show a composition bias toward basic residues; it reads GGRRRKRPLQ. The fork-head DNA-binding region spans 53 to 147; the sequence is KPPYSYIALI…ESGSFLRRRK (95 aa).

Phosphorylated. In terms of tissue distribution, detected in adult brain, placenta, lung, liver, skeletal muscle, kidney, pancreas, heart, colon, small intestine testis and thymus. Expression was strongest in heart and pancreas.

It is found in the nucleus. Functionally, transcription factor that binds consensus sites on a variety of gene promoters and activate their transcription. Involved in proper palate formation, most probably through the expression of MSX1 and TGFB3 genes which are direct targets of this transcription factor. Also implicated in thyroid gland morphogenesis. May indirectly play a role in cell growth and migration through the regulation of WNT5A expression. This Homo sapiens (Human) protein is Forkhead box protein E1 (FOXE1).